The following is a 427-amino-acid chain: Gamma-glutamyl phosphate reductase (427 aa).

The protein belongs to the gamma-glutamyl phosphate reductase family.

The protein resides in the cytoplasm. The catalysed reaction is L-glutamate 5-semialdehyde + phosphate + NADP(+) = L-glutamyl 5-phosphate + NADPH + H(+). It participates in amino-acid biosynthesis; L-proline biosynthesis; L-glutamate 5-semialdehyde from L-glutamate: step 2/2. Catalyzes the NADPH-dependent reduction of L-glutamate 5-phosphate into L-glutamate 5-semialdehyde and phosphate. The product spontaneously undergoes cyclization to form 1-pyrroline-5-carboxylate. This Brucella anthropi (strain ATCC 49188 / DSM 6882 / CCUG 24695 / JCM 21032 / LMG 3331 / NBRC 15819 / NCTC 12168 / Alc 37) (Ochrobactrum anthropi) protein is Gamma-glutamyl phosphate reductase.